The primary structure comprises 184 residues: UPF0316 protein YebE (184 aa).

3 helical membrane passes run 9-29, 41-61, and 67-87; these read GIAMVLIILIINIVYVSFFTI, LAAGISTIEILVYVTGLSLVL, and IQNVIAYALGYGLGVIVGMKI.

It belongs to the UPF0316 family.

It is found in the cell membrane. The sequence is that of UPF0316 protein YebE (yebE) from Bacillus subtilis (strain 168).